We begin with the raw amino-acid sequence, 253 residues long: Ferritin-2, chloroplastic (253 aa).

The transit peptide at 1 to 45 (MLHKASPALSLLSSGYTGGGNLFPPSRNSSNLLFSPSGSRFSVQA) directs the protein to the chloroplast. The tract at residues 46–82 (AKGTNTKSLTGVVFEPFEEVKKEMELVPTTPFVSLAR) is extension peptide (EP). The 154-residue stretch at 83–236 (HKFSDDSESA…EYVAQLRRIG (154 aa)) folds into the Ferritin-like diiron domain. 5 residues coordinate Fe cation: glutamate 100, glutamate 135, histidine 138, glutamate 184, and glutamine 218.

The protein belongs to the ferritin family. As to quaternary structure, oligomer of 24 subunits. There are two types of subunits: L (light) chain and H (heavy) chain. The major chain can be light or heavy, depending on the species and tissue type. The functional molecule forms a roughly spherical shell with a diameter of 12 nm and contains a central cavity into which the insoluble mineral iron core is deposited.

Its subcellular location is the plastid. The protein resides in the chloroplast. It carries out the reaction 4 Fe(2+) + O2 + 4 H(+) = 4 Fe(3+) + 2 H2O. In terms of biological role, stores iron in a soluble, non-toxic, readily available form. Important for iron homeostasis. Has ferroxidase activity. Iron is taken up in the ferrous form and deposited as ferric hydroxides after oxidation. In Arabidopsis thaliana (Mouse-ear cress), this protein is Ferritin-2, chloroplastic (FER2).